A 279-amino-acid chain; its full sequence is uncharacterized protein (279 aa).

The N-terminal stretch at 1-21 (MKIIRTLFLLLIAVYGSSVVA) is a signal peptide.

The protein to E.coli YfcO.

This is an uncharacterized protein from Salmonella typhimurium (strain LT2 / SGSC1412 / ATCC 700720).